Here is a 247-residue protein sequence, read N- to C-terminus: MAGRVQEIVCRGGWMRAVVVLRDEIEPSFDAEEIHLLVLENGTGGRAISEKGEMRAMARDKIRAIRRAEKLFERFEEFYNVSGLSIAFDRFEDELIHAVESLGAEVVYFFTSMPLPERLLSENVTLVFPRGGLSFNKALYVHSSSTPNTAWLERAKELFILAIVQPTMPPEASSRKFREEFERMERETEELSSHLKAERAVIRGNIVEDTLRYSEKHGADTIFLNRGLGKENIEKIVERAKASVVVV.

This is an uncharacterized protein from Archaeoglobus fulgidus (strain ATCC 49558 / DSM 4304 / JCM 9628 / NBRC 100126 / VC-16).